The primary structure comprises 483 residues: MTQATLKQLSQQLAAKQVSSVELASQYLDRIEALNPQLNAIVTVDREKTLAEARAADARLAAGDARALTGVPLVHKDLFCQQGWKTSCGSRMLDNFVSPYSAHVVEQCAAAGMVTLGRANMDEFAMGSSNENSFYGAVKNPWDLNAIPGGSSGGSAAAVAARLAPVATATDTGGSIRQPASHCGVTGIKPTYGVVSRYGMVAYASSLDQGGPIAQTAEDCALMLNVMAGFDARDSTSLERAKEDYARDLNQSLSGLKVGLPKEYFAAGLDADVARAVDNAVAELKKLGAEAVEISLPNTELSIPAYYVIAPAEASTNLSRYDGVRYGHRAKDYKDLVDMYEKTRAEGFGDEVKRRILVGSYVLSHGYYDAYYLKAQKIRRLIANDFKAAFEQCDVILGPVAPTAAFNIGEKSGDPVQMYLSDIYTLSVNLAGLPGMSVPAGFAANGRPIGLQIIGNYFAEARMLNVAHQFQQATDWHAKAPSL.

Catalysis depends on charge relay system residues lysine 76 and serine 151. The active-site Acyl-ester intermediate is serine 175.

This sequence belongs to the amidase family. GatA subfamily. In terms of assembly, heterotrimer of A, B and C subunits.

It carries out the reaction L-glutamyl-tRNA(Gln) + L-glutamine + ATP + H2O = L-glutaminyl-tRNA(Gln) + L-glutamate + ADP + phosphate + H(+). Allows the formation of correctly charged Gln-tRNA(Gln) through the transamidation of misacylated Glu-tRNA(Gln) in organisms which lack glutaminyl-tRNA synthetase. The reaction takes place in the presence of glutamine and ATP through an activated gamma-phospho-Glu-tRNA(Gln). The sequence is that of Glutamyl-tRNA(Gln) amidotransferase subunit A from Chromobacterium violaceum (strain ATCC 12472 / DSM 30191 / JCM 1249 / CCUG 213 / NBRC 12614 / NCIMB 9131 / NCTC 9757 / MK).